The primary structure comprises 249 residues: Acetylglutamate kinase (249 aa).

Substrate is bound by residues 38 to 39 (GG), arginine 60, and asparagine 147.

Belongs to the acetylglutamate kinase family. ArgB subfamily.

It is found in the cytoplasm. It catalyses the reaction N-acetyl-L-glutamate + ATP = N-acetyl-L-glutamyl 5-phosphate + ADP. Its pathway is amino-acid biosynthesis; L-arginine biosynthesis; N(2)-acetyl-L-ornithine from L-glutamate: step 2/4. In terms of biological role, catalyzes the ATP-dependent phosphorylation of N-acetyl-L-glutamate. This chain is Acetylglutamate kinase, found in Deinococcus geothermalis (strain DSM 11300 / CIP 105573 / AG-3a).